Reading from the N-terminus, the 429-residue chain is Threonine synthase (429 aa).

K108 is modified (N6-(pyridoxal phosphate)lysine).

The protein belongs to the threonine synthase family. It depends on pyridoxal 5'-phosphate as a cofactor.

It catalyses the reaction O-phospho-L-homoserine + H2O = L-threonine + phosphate. Its pathway is amino-acid biosynthesis; L-threonine biosynthesis; L-threonine from L-aspartate: step 5/5. Catalyzes the gamma-elimination of phosphate from L-phosphohomoserine and the beta-addition of water to produce L-threonine. This Buchnera aphidicola subsp. Schizaphis graminum (strain Sg) protein is Threonine synthase (thrC).